A 324-amino-acid chain; its full sequence is 7,8-didemethyl-8-hydroxy-5-deazariboflavin synthase (324 aa).

Residues 4-239 (VTYSKNVFIP…QEVAIQIPPN (236 aa)) form the Radical SAM core domain. Cys18, Cys22, and Cys25 together coordinate [4Fe-4S] cluster.

It belongs to the radical SAM superfamily. CofG family. As to quaternary structure, consists of two subunits, CofG and CofH. [4Fe-4S] cluster serves as cofactor.

The enzyme catalyses 5-amino-5-(4-hydroxybenzyl)-6-(D-ribitylimino)-5,6-dihydrouracil + S-adenosyl-L-methionine = 7,8-didemethyl-8-hydroxy-5-deazariboflavin + 5'-deoxyadenosine + L-methionine + NH4(+) + H(+). The protein operates within cofactor biosynthesis; coenzyme F0 biosynthesis. Catalyzes the radical-mediated synthesis of 7,8-didemethyl-8-hydroxy-5-deazariboflavin from 5-amino-5-(4-hydroxybenzyl)-6-(D-ribitylimino)-5,6-dihydrouracil. The sequence is that of 7,8-didemethyl-8-hydroxy-5-deazariboflavin synthase from Archaeoglobus fulgidus (strain ATCC 49558 / DSM 4304 / JCM 9628 / NBRC 100126 / VC-16).